We begin with the raw amino-acid sequence, 487 residues long: MKAQPKASHFIDGEYVEDTDGTVIESLYPATGEVIARLHAATPAIVEKAIAAARRAQPEWAAMSPMARGRILKRAADIMRERNRALSELETLDTGKPIQETIVADPTSGADAFEFFGGVAPAGLNGSHIPLGQDFAYTKRVPLGVCVGIGAWNYPQQIACWKAAPALISGNAMVFKPSENTPLGALKIAEILHEAGLPKGLFNVIQGDRDTGPLLVNHPDVAKVSLTGSVPTGRRVAAAAAGNLKHVTMELGGKSPLIVFDDADLDSAVGGAMLGNFYSTGQVCSNGTRVFVQKGIKTEFLKRLKARTEAMLIGDPLDEATQIGPMVSWAQREKVVAYIEKGKAEGATLVAGGGIPNNVSGEGYYIQPTVFADVTDDMTIAREEIFGPVMSVLDFDDEDEVIARANASEFGLSGGVFTADLSRAHRVVDRLEAGTLWINAYNLAPVEIPFGGSKQSGFGRENSLAALEHYSELKTVYVGMGPVQAPY.

K(+) contacts are provided by Ser26 and Asp93. 150-152 (GAW) serves as a coordination point for NAD(+). Lys162 functions as the Charge relay system in the catalytic mechanism. NAD(+) contacts are provided by residues 176–179 (KPSE) and 229–232 (SVPT). Leu244 serves as a coordination point for K(+). The active-site Proton acceptor is Glu250. The NAD(+) site is built by Gly252, Cys284, and Glu384. The active-site Nucleophile is Cys284. Cysteine sulfenic acid (-SOH) is present on Cys284. K(+) contacts are provided by Lys454 and Gly457. The active-site Charge relay system is the Glu461.

Belongs to the aldehyde dehydrogenase family. In terms of assembly, dimer of dimers. The cofactor is K(+).

It catalyses the reaction betaine aldehyde + NAD(+) + H2O = glycine betaine + NADH + 2 H(+). Its pathway is amine and polyamine biosynthesis; betaine biosynthesis via choline pathway; betaine from betaine aldehyde: step 1/1. In terms of biological role, involved in the biosynthesis of the osmoprotectant glycine betaine. Catalyzes the irreversible oxidation of betaine aldehyde to the corresponding acid. The protein is Betaine aldehyde dehydrogenase of Rhizobium leguminosarum bv. trifolii (strain WSM2304).